A 212-amino-acid polypeptide reads, in one-letter code: 3,4-dihydroxy-2-butanone 4-phosphate synthase (212 aa).

Residues 37 to 38 (RE), aspartate 42, 150 to 154 (RRGHT), and glutamate 174 each bind D-ribulose 5-phosphate. Glutamate 38 lines the Mg(2+) pocket. Mg(2+) is bound at residue histidine 153.

Belongs to the DHBP synthase family. In terms of assembly, homodimer. Requires Mg(2+) as cofactor. It depends on Mn(2+) as a cofactor.

The catalysed reaction is D-ribulose 5-phosphate = (2S)-2-hydroxy-3-oxobutyl phosphate + formate + H(+). The protein operates within cofactor biosynthesis; riboflavin biosynthesis; 2-hydroxy-3-oxobutyl phosphate from D-ribulose 5-phosphate: step 1/1. Catalyzes the conversion of D-ribulose 5-phosphate to formate and 3,4-dihydroxy-2-butanone 4-phosphate. The protein is 3,4-dihydroxy-2-butanone 4-phosphate synthase of Shewanella halifaxensis (strain HAW-EB4).